The chain runs to 568 residues: 2-succinyl-5-enolpyruvyl-6-hydroxy-3-cyclohexene-1-carboxylate synthase (568 aa).

It belongs to the TPP enzyme family. MenD subfamily. As to quaternary structure, homodimer. Mg(2+) serves as cofactor. Mn(2+) is required as a cofactor. The cofactor is thiamine diphosphate.

The catalysed reaction is isochorismate + 2-oxoglutarate + H(+) = 5-enolpyruvoyl-6-hydroxy-2-succinyl-cyclohex-3-ene-1-carboxylate + CO2. The protein operates within quinol/quinone metabolism; 1,4-dihydroxy-2-naphthoate biosynthesis; 1,4-dihydroxy-2-naphthoate from chorismate: step 2/7. Its pathway is quinol/quinone metabolism; menaquinone biosynthesis. Catalyzes the thiamine diphosphate-dependent decarboxylation of 2-oxoglutarate and the subsequent addition of the resulting succinic semialdehyde-thiamine pyrophosphate anion to isochorismate to yield 2-succinyl-5-enolpyruvyl-6-hydroxy-3-cyclohexene-1-carboxylate (SEPHCHC). This chain is 2-succinyl-5-enolpyruvyl-6-hydroxy-3-cyclohexene-1-carboxylate synthase, found in Haemophilus influenzae (strain PittGG).